We begin with the raw amino-acid sequence, 552 residues long: DNA ligase (552 aa).

Glutamate 229 is an ATP binding site. The N6-AMP-lysine intermediate role is filled by lysine 231. ATP contacts are provided by arginine 236 and glutamate 283. Mg(2+) contacts are provided by glutamate 283 and glutamate 377. Positions 382 and 397 each coordinate ATP.

This sequence belongs to the ATP-dependent DNA ligase family. In terms of assembly, interacts with host TOP2A and TOP2B. The cofactor is Mg(2+).

The protein resides in the host cytoplasm. The catalysed reaction is ATP + (deoxyribonucleotide)n-3'-hydroxyl + 5'-phospho-(deoxyribonucleotide)m = (deoxyribonucleotide)n+m + AMP + diphosphate.. Functionally, DNA ligase that seals nicks in double-stranded DNA during DNA replication, DNA recombination and DNA repair. Recruits cellular topoisomerase II to sites of viral replication and assembly. The protein is DNA ligase (OPG180) of Homo sapiens (Human).